We begin with the raw amino-acid sequence, 256 residues long: CRAL-TRIO domain-containing protein DDB_G0278031 (256 aa).

In terms of domain architecture, CRAL-TRIO spans 82–245; it reads NPELAMKSSS…EYGGTLNLTY (164 aa).

This Dictyostelium discoideum (Social amoeba) protein is CRAL-TRIO domain-containing protein DDB_G0278031.